A 342-amino-acid chain; its full sequence is [Citrate [pro-3S]-lyase] ligase (342 aa).

Residues M1 to E127 enclose the N-acetyltransferase domain.

The catalysed reaction is holo-[citrate lyase ACP] + acetate + ATP = acetyl-[citrate lyase ACP] + AMP + diphosphate. Functionally, acetylation of prosthetic group (2-(5''-phosphoribosyl)-3'-dephosphocoenzyme-A) of the gamma subunit of citrate lyase. In Klebsiella pneumoniae, this protein is [Citrate [pro-3S]-lyase] ligase (citC).